Here is a 144-residue protein sequence, read N- to C-terminus: Austinoid biosynthesis cluster protein S (144 aa).

The protein belongs to the trt14 isomerase family. Homodimer.

The protein operates within secondary metabolite biosynthesis; terpenoid biosynthesis. Part of the gene cluster that mediates the biosynthesis of calidodehydroaustin, a fungal meroterpenoid. The first step of the pathway is the synthesis of 3,5-dimethylorsellinic acid by the polyketide synthase ausA. 3,5-dimethylorsellinic acid is then prenylated by the polyprenyl transferase ausN. Further epoxidation by the FAD-dependent monooxygenase ausM and cyclization by the probable terpene cyclase ausL lead to the formation of protoaustinoid A. Protoaustinoid A is then oxidized to spiro-lactone preaustinoid A3 by the combined action of the FAD-binding monooxygenases ausB and ausC, and the dioxygenase ausE. Acid-catalyzed keto-rearrangement and ring contraction of the tetraketide portion of preaustinoid A3 by ausJ lead to the formation of preaustinoid A4. The aldo-keto reductase ausK, with the help of ausH, is involved in the next step by transforming preaustinoid A4 into isoaustinone which is in turn hydroxylated by the P450 monooxygenase ausI to form austinolide. The cytochrome P450 monooxygenase ausG modifies austinolide to austinol. Austinol is further acetylated to austin by the O-acetyltransferase ausP, which spontaneously changes to dehydroaustin. The cytochrome P450 monooxygenase ausR then converts dehydroaustin is into 7-dehydrodehydroaustin. The hydroxylation catalyzed by ausR permits the O-acetyltransferase ausQ to add an additional acetyl group to the molecule, leading to the formation of acetoxydehydroaustin. The short chain dehydrogenase ausT catalyzes the reduction of the double bond present between carbon atoms 1 and 2 to convert 7-dehydrodehydroaustin into 1,2-dihydro-7-hydroxydehydroaustin. AusQ catalyzes not only an acetylation reaction but also the addition of the PKS ausV diketide product to 1,2-dihydro-7-hydroxydehydroaustin, forming precalidodehydroaustin. Finally, the iron/alpha-ketoglutarate-dependent dioxygenase converts precalidodehydroaustin into calidodehydroaustin. AusS is necessary for austinoids production and may play a possible function as a regulator. Its function is as follows. May play a possible function as a regulator. This is Austinoid biosynthesis cluster protein S from Aspergillus calidoustus.